Consider the following 79-residue polypeptide: Acyl carrier protein (79 aa).

Positions 4 to 79 (AEIKDKVYDI…QAIDYIVNKK (76 aa)) constitute a Carrier domain. Ser39 bears the O-(pantetheine 4'-phosphoryl)serine mark.

Belongs to the acyl carrier protein (ACP) family. Post-translationally, 4'-phosphopantetheine is transferred from CoA to a specific serine of apo-ACP by AcpS. This modification is essential for activity because fatty acids are bound in thioester linkage to the sulfhydryl of the prosthetic group.

It is found in the cytoplasm. It functions in the pathway lipid metabolism; fatty acid biosynthesis. Its function is as follows. Carrier of the growing fatty acid chain in fatty acid biosynthesis. The sequence is that of Acyl carrier protein from Chlorobaculum parvum (strain DSM 263 / NCIMB 8327) (Chlorobium vibrioforme subsp. thiosulfatophilum).